The sequence spans 410 residues: Lysosome-associated membrane glycoprotein 2 (410 aa).

The first 28 residues, 1–28 (MVCFRLFPVPGSGLVLVCLVLGAVRSYA), serve as a signal peptide directing secretion. Residues 29–192 (LELNLTDSEN…STNEFLCDKD (164 aa)) form a first lumenal domain region. The Lumenal segment spans residues 29-375 (LELNLTDSEN…QDCSADDDNF (347 aa)). 2 N-linked (GlcNAc...) (polylactosaminoglycan) asparagine glycosylation sites follow: Asn32 and Asn38. A disulfide bridge links Cys41 with Cys79. 6 N-linked (GlcNAc...) asparagine glycosylation sites follow: Asn49, Asn58, Asn75, Asn101, Asn123, and Asn179. An intrachain disulfide couples Cys153 to Cys189. A hinge region spans residues 193 to 228 (KTSTVAPTIHTTVPSPTTTPTPKEKPEAGTYSVNNG). Ser195 carries O-linked (GalNAc...) serine glycosylation. O-linked (GalNAc...) threonine glycosylation is found at Thr196, Thr200, Thr203, and Thr204. Residues 199 to 213 (PTIHTTVPSPTTTPT) are compositionally biased toward low complexity. A disordered region spans residues 199–221 (PTIHTTVPSPTTTPTPKEKPEAG). A glycan (O-linked (GalNAc...) serine; partial) is linked at Ser207. Thr209 is a glycosylation site (O-linked (GalNAc...) threonine; partial). Thr210 and Thr211 each carry an O-linked (GalNAc...) threonine glycan. Thr213 carries an O-linked (GalNAc...) threonine; partial glycan. N-linked (GlcNAc...) asparagine glycans are attached at residues Asn229, Asn242, Asn257, Asn275, and Asn300. Positions 229–375 (NDTCLLATMG…QDCSADDDNF (147 aa)) are second lumenal domain. Cys232 and Cys265 form a disulfide bridge. Residue Asn307 is glycosylated (N-linked (GlcNAc...) (polylactosaminoglycan) asparagine). N-linked (GlcNAc...) asparagine glycosylation is found at Asn317 and Asn356. A disulfide bridge links Cys331 with Cys368. Residues 376–399 (LVPIAVGAALAGVLILVLLAYFIG) traverse the membrane as a helical segment. Residues 400-410 (LKHHHAGYEQF) are Cytoplasmic-facing. An important for binding and subsequent lysosomal degradation of target proteins region spans residues 401–404 (KHHH).

It belongs to the LAMP family. In terms of assembly, monomer. Homodimer. Homotrimer. Forms large homooligomers. Interacts (via its cytoplasmic region) with HSPA8; HSPA8 mediates recruitment of proteins with a KFERQ motif to the surface of the lysosome for chaperone-mediated autophagy. Interacts with HSP90 in the lysosome lumen; this enhances LAMP2 stability. Interacts with MLLT11. Interacts with ABCB9. Interacts with FURIN. Interacts with CT55; this interaction may be important for LAMP2 protein stability. Interacts with TMEM175; inhibiting the proton channel activity of TMEM175. Forms a ternary complex with RAB7A and RUFY4 (via RUN domain); the interaction with RAB7A is mediated by RUFY4 (via RUN and coiled coil domains). As to quaternary structure, (Microbial infection) Interacts with mumps virus protein F; this interaction promotes protein F cleavage by FURIN. O- and N-glycosylated; some of the 16 N-linked glycans are polylactosaminoglycans. Isoform LAMP-2A is highly expressed in placenta, lung and liver, less in kidney and pancreas, low in brain and skeletal muscle. Isoform LAMP-2B is detected in spleen, thymus, prostate, testis, small intestine, colon, skeletal muscle, brain, placenta, lung, kidney, ovary and pancreas and liver. Isoform LAMP-2C is detected in small intestine, colon, heart, brain, skeletal muscle, and at lower levels in kidney and placenta.

It localises to the lysosome membrane. It is found in the endosome membrane. The protein localises to the cell membrane. Its subcellular location is the cytoplasmic vesicle. The protein resides in the autophagosome membrane. Functionally, lysosomal membrane glycoprotein which plays an important role in lysosome biogenesis, lysosomal pH regulation and autophagy. Acts as an important regulator of lysosomal lumen pH regulation by acting as a direct inhibitor of the proton channel TMEM175, facilitating lysosomal acidification for optimal hydrolase activity. Plays an important role in chaperone-mediated autophagy, a process that mediates lysosomal degradation of proteins in response to various stresses and as part of the normal turnover of proteins with a long biological half-live. Functions by binding target proteins, such as GAPDH, NLRP3 and MLLT11, and targeting them for lysosomal degradation. In the chaperone-mediated autophagy, acts downstream of chaperones, such as HSPA8/HSC70, which recognize and bind substrate proteins and mediate their recruitment to lysosomes, where target proteins bind LAMP2. Plays a role in lysosomal protein degradation in response to starvation. Required for the fusion of autophagosomes with lysosomes during autophagy. Cells that lack LAMP2 express normal levels of VAMP8, but fail to accumulate STX17 on autophagosomes, which is the most likely explanation for the lack of fusion between autophagosomes and lysosomes. Required for normal degradation of the contents of autophagosomes. Required for efficient MHC class II-mediated presentation of exogenous antigens via its function in lysosomal protein degradation; antigenic peptides generated by proteases in the endosomal/lysosomal compartment are captured by nascent MHC II subunits. Is not required for efficient MHC class II-mediated presentation of endogenous antigens. In terms of biological role, modulates chaperone-mediated autophagy. Decreases presentation of endogenous antigens by MHCII. Does not play a role in the presentation of exogenous and membrane-derived antigens by MHCII. Its function is as follows. (Microbial infection) Supports the FURIN-mediated cleavage of mumps virus fusion protein F by interacting with both FURIN and the unprocessed form but not the processed form of the viral protein F. The chain is Lysosome-associated membrane glycoprotein 2 (LAMP2) from Homo sapiens (Human).